Here is a 256-residue protein sequence, read N- to C-terminus: Thiazole synthase (256 aa).

The Schiff-base intermediate with DXP role is filled by Lys-95. 1-deoxy-D-xylulose 5-phosphate is bound by residues Gly-156, 182–183 (AG), and 204–205 (NT).

It belongs to the ThiG family. Homotetramer. Forms heterodimers with either ThiH or ThiS.

It localises to the cytoplasm. It carries out the reaction [ThiS sulfur-carrier protein]-C-terminal-Gly-aminoethanethioate + 2-iminoacetate + 1-deoxy-D-xylulose 5-phosphate = [ThiS sulfur-carrier protein]-C-terminal Gly-Gly + 2-[(2R,5Z)-2-carboxy-4-methylthiazol-5(2H)-ylidene]ethyl phosphate + 2 H2O + H(+). Its pathway is cofactor biosynthesis; thiamine diphosphate biosynthesis. In terms of biological role, catalyzes the rearrangement of 1-deoxy-D-xylulose 5-phosphate (DXP) to produce the thiazole phosphate moiety of thiamine. Sulfur is provided by the thiocarboxylate moiety of the carrier protein ThiS. In vitro, sulfur can be provided by H(2)S. This Salmonella paratyphi B (strain ATCC BAA-1250 / SPB7) protein is Thiazole synthase.